Here is a 556-residue protein sequence, read N- to C-terminus: Glutamine--tRNA ligase (556 aa).

A 'HIGH' region motif is present at residues 34–44 (PEPNGYLHIGH). Residues 35–37 (EPN) and 41–47 (HIGHAKS) each bind ATP. Positions 67 and 212 each coordinate L-glutamine. ATP-binding positions include threonine 231, 261–262 (RL), and 269–271 (MSK). A 'KMSKS' region motif is present at residues 268-272 (IMSKR).

Belongs to the class-I aminoacyl-tRNA synthetase family. Monomer.

It localises to the cytoplasm. The catalysed reaction is tRNA(Gln) + L-glutamine + ATP = L-glutaminyl-tRNA(Gln) + AMP + diphosphate. The sequence is that of Glutamine--tRNA ligase from Sodalis glossinidius (strain morsitans).